Reading from the N-terminus, the 473-residue chain is Flagellum-specific ATP synthase (473 aa).

Ala-187–Ser-194 is a binding site for ATP.

This sequence belongs to the ATPase alpha/beta chains family.

Its subcellular location is the cytoplasm. It carries out the reaction ATP + H2O + 4 H(+)(in) = ADP + phosphate + 5 H(+)(out). Its function is as follows. Probable catalytic subunit of a protein translocase for flagellum-specific export, or a proton translocase involved in local circuits at the flagellum. This chain is Flagellum-specific ATP synthase (fliI), found in Agrobacterium fabrum (strain C58 / ATCC 33970) (Agrobacterium tumefaciens (strain C58)).